The following is a 177-amino-acid chain: FCS-Like Zinc finger 1 (177 aa).

Positions 22–46 (SLSEMEAGFSGNNNNSNNHGNPQNG) are enriched in low complexity. 2 disordered regions span residues 22 to 49 (SLSE…GVVS) and 134 to 177 (ERDE…VAAA). The segment at 96 to 140 (HFLDSCFLCKKPLGDNRDIYMYRGDTPFCSEECRQEQIERDEAKE) adopts an FLZ-type zinc-finger fold. Basic and acidic residues-rich tracts occupy residues 134–143 (ERDEAKEKKQ) and 154–168 (RRKE…RDYA).

Belongs to the FLZ family. Interacts with KIN10 and KIN11 via its FLZ-type zinc finger domain. Interacts with KINB1, KINB2 and KINB3 via its N-terminal part. Interacts with DSP3 and BBX21 via its FLZ-type zinc finger domain. Forms heterodimer with FLZ7 and FLZ15 in vitro.

The protein localises to the nucleus. The protein resides in the cytoplasm. In terms of biological role, may act as an adapter to facilitate the interaction of SnRK1 complex with effector proteins, conferring tissue- and stimulus-type specific differences in the SnRK1 regulation pathway. This is FCS-Like Zinc finger 1 from Arabidopsis thaliana (Mouse-ear cress).